The primary structure comprises 117 residues: Large ribosomal subunit protein bL20c (117 aa).

Belongs to the bacterial ribosomal protein bL20 family.

Its subcellular location is the plastid. The protein localises to the chloroplast. Binds directly to 23S ribosomal RNA and is necessary for the in vitro assembly process of the 50S ribosomal subunit. It is not involved in the protein synthesizing functions of that subunit. The chain is Large ribosomal subunit protein bL20c from Acorus calamus (Sweet flag).